A 167-amino-acid chain; its full sequence is Large ribosomal subunit protein uL10 (167 aa).

It belongs to the universal ribosomal protein uL10 family. As to quaternary structure, part of the ribosomal stalk of the 50S ribosomal subunit. The N-terminus interacts with L11 and the large rRNA to form the base of the stalk. The C-terminus forms an elongated spine to which L12 dimers bind in a sequential fashion forming a multimeric L10(L12)X complex.

In terms of biological role, forms part of the ribosomal stalk, playing a central role in the interaction of the ribosome with GTP-bound translation factors. The chain is Large ribosomal subunit protein uL10 from Chromohalobacter salexigens (strain ATCC BAA-138 / DSM 3043 / CIP 106854 / NCIMB 13768 / 1H11).